The following is a 171-amino-acid chain: Disulfide bond formation protein B (171 aa).

Residues 1–8 (MRLSYRLV) are Cytoplasmic-facing. A helical transmembrane segment spans residues 9-25 (SGLLVLASIVGMSFALY). The Periplasmic portion of the chain corresponds to 26-43 (LEHVKGLEPCPLCIFQRV). An intrachain disulfide couples C35 to C38. The helical transmembrane segment at 44–60 (GLMAMGFVALIAFLHNP) threads the bilayer. The Cytoplasmic portion of the chain corresponds to 61 to 67 (VSNAIKR). The helical transmembrane segment at 68-85 (FYAFLAGVAILWSVGVAG) threads the bilayer. Topologically, residues 86–142 (RHVWLQHLPPDQVPSCGPGLNYLIDALPMKTVLQEVLSGSGECAAIDWTFLGQSLPV) are periplasmic. A disulfide bridge connects residues C101 and C128. The chain crosses the membrane as a helical span at residues 143-161 (WSLAYFLLLLLVCLWQLFR). At 162-171 (FYPVFKTAKK) the chain is on the cytoplasmic side.

This sequence belongs to the DsbB family.

The protein resides in the cell inner membrane. In terms of biological role, required for disulfide bond formation in some periplasmic proteins. Acts by oxidizing the DsbA protein. The sequence is that of Disulfide bond formation protein B from Acinetobacter baumannii (strain ATCC 17978 / DSM 105126 / CIP 53.77 / LMG 1025 / NCDC KC755 / 5377).